A 525-amino-acid chain; its full sequence is DEAD-box ATP-dependent RNA helicase CshA (525 aa).

The Q motif signature appears at 2–30 (TTFRELGLSDSLLQSVESMGFEEATPIQA). The Helicase ATP-binding domain occupies 33 to 203 (IPHALQGKDI…ERFMTEPQHI (171 aa)). 46–53 (AQTGTGKT) serves as a coordination point for ATP. The DEAD box signature appears at 151-154 (DEAD). The Helicase C-terminal domain maps to 214-374 (NIQQFYLEVQ…RMDAPTLDEA (161 aa)). The interval 428 to 525 (TTPIALTSEP…RKHHSRKPQA (98 aa)) is disordered. The segment covering 458–503 (DGNRNRSRDGRGGDGRNRDRNRDGRNRDGNRDRNRDGGNRGRRGEG) has biased composition (basic and acidic residues). A compositionally biased stretch (basic residues) spans 515-525 (ERKHHSRKPQA).

The protein belongs to the DEAD box helicase family. CshA subfamily. Oligomerizes, may be a member of the RNA degradosome.

It localises to the cytoplasm. It carries out the reaction ATP + H2O = ADP + phosphate + H(+). DEAD-box RNA helicase possibly involved in RNA degradation. Unwinds dsRNA in both 5'- and 3'-directions, has RNA-dependent ATPase activity. This Bacillus cereus (strain ATCC 10987 / NRS 248) protein is DEAD-box ATP-dependent RNA helicase CshA.